The sequence spans 1099 residues: Solute carrier family 38 member 10 (1099 aa).

The next 10 helical transmembrane spans lie at 9–31, 36–58, 84–104, 123–143, 153–173, 229–249, 272–292, 323–343, 345–365, and 378–398; these read WGLV…PFCF, IVLG…MFLV, LVET…YVVI, TFRV…LSLQ, FSAM…LSSF, IFAS…FFGY, MIRV…ILPC, VLTL…PNVE, ILGF…PALI, and VVLW…LSVS. 2 disordered regions span residues 440–679 and 720–1047; these read DSQE…EEAG and EIRQ…LAPK. A Phosphoserine modification is found at Ser441. 5 stretches are compositionally biased toward basic and acidic residues: residues 441–454, 493–508, 517–528, 544–561, and 586–599; these read SQEK…KEVL, EAHR…KVVV, PEEKKPPPKLPD, ESEK…KRPE, and PRKE…RDLH. Ser607 and Ser635 each carry phosphoserine. Basic and acidic residues-rich tracts occupy residues 653–663, 720–735, and 749–766; these read EAAEQREKNEA, EIRQ…KPKP, and GQEE…HAGE. A coiled-coil region spans residues 698–734; that stretch reads VQQKRLLDQQEKLLAVIEEQHKEIRQQRQEGEEDKPK. Thr767 carries the phosphothreonine modification. Composition is skewed to basic and acidic residues over residues 793 to 802, 852 to 894, 917 to 928, 957 to 969, and 1010 to 1022; these read KGQHPLEEVK, EPVH…ETGK, EDSHSKSRHSEP, KSQD…RSEG, and QKPE…RDLK. Ser886 is subject to Phosphoserine.

It belongs to the amino acid/polyamine transporter 2 family. Only expressed in the pituitary, adrenal gland, stomach and in the upper gastrointestinal tract.

It localises to the membrane. The enzyme catalyses L-glutamate(out) = L-glutamate(in). It catalyses the reaction L-glutamine(out) = L-glutamine(in). The catalysed reaction is L-alanine(in) = L-alanine(out). It carries out the reaction L-serine(in) = L-serine(out). The enzyme catalyses L-leucine(in) = L-leucine(out). In terms of biological role, facilitates bidirectional transport of amino acids. May act as a glutamate sensor that regulates glutamate-glutamine cycle and mTOR signaling in the brain. The transport mechanism remains to be elucidated. This is Solute carrier family 38 member 10 from Rattus norvegicus (Rat).